A 326-amino-acid chain; its full sequence is UDP-3-O-acylglucosamine N-acyltransferase (326 aa).

His225 serves as the catalytic Proton acceptor.

Belongs to the transferase hexapeptide repeat family. LpxD subfamily. Homotrimer.

It carries out the reaction a UDP-3-O-[(3R)-3-hydroxyacyl]-alpha-D-glucosamine + a (3R)-hydroxyacyl-[ACP] = a UDP-2-N,3-O-bis[(3R)-3-hydroxyacyl]-alpha-D-glucosamine + holo-[ACP] + H(+). The protein operates within bacterial outer membrane biogenesis; LPS lipid A biosynthesis. In terms of biological role, catalyzes the N-acylation of UDP-3-O-acylglucosamine using 3-hydroxyacyl-ACP as the acyl donor. Is involved in the biosynthesis of lipid A, a phosphorylated glycolipid that anchors the lipopolysaccharide to the outer membrane of the cell. The sequence is that of UDP-3-O-acylglucosamine N-acyltransferase from Acidovorax ebreus (strain TPSY) (Diaphorobacter sp. (strain TPSY)).